Reading from the N-terminus, the 1422-residue chain is Cardiac-enriched FHL2-interacting protein (1422 aa).

A disordered region spans residues 1–23 (MQGNKKCADGFSDTSSIGSVLDE). The residue at position 119 (threonine 119) is a Phosphothreonine. 9 disordered regions span residues 151 to 177 (RTEA…KFAH), 199 to 265 (AGVS…GRGK), 279 to 443 (SAFE…SSPF), 459 to 500 (LETS…KAPS), 516 to 718 (YSPL…SDSQ), 731 to 850 (FSTS…TNKH), 877 to 1127 (VSSE…HLER), 1142 to 1244 (TGAA…GWEP), and 1353 to 1422 (RQGS…EGVS). Polar residues predominate over residues 201 to 210 (VSSTHQSSHQ). Composition is skewed to basic and acidic residues over residues 284–298 (WDAH…KDIT) and 305–315 (KAPKHYEDMPL). Serine 327 is subject to Phosphoserine. Residues 342–351 (SPSGIQSTSG) are compositionally biased toward polar residues. Positions 395-405 (GPHDASEDKKQ) are enriched in basic and acidic residues. A compositionally biased stretch (polar residues) spans 461–470 (TSDTQPVETS). Serine 472 carries the post-translational modification Phosphoserine. Composition is skewed to basic and acidic residues over residues 481 to 495 (QEKE…DSYK), 524 to 537 (GFDE…DGKQ), and 579 to 588 (PAMDSRESFA). The span at 590–606 (SHPTFSSPSASSKTHFS) shows a compositional bias: low complexity. Composition is skewed to basic and acidic residues over residues 611–622 (AAERNSHEKEEA), 635–644 (WHPDSRENLP), and 653–675 (CNRD…EKRL). Residues 731 to 744 (FSTSSSDQSFASFE) are compositionally biased toward low complexity. A compositionally biased stretch (basic and acidic residues) spans 790–801 (GVEEHRQKETQR). Serine 815 is subject to Phosphoserine. Over residues 828–839 (ADKDTALSHAKD) the composition is skewed to basic and acidic residues. Composition is skewed to polar residues over residues 907–926 (SESQ…STEQ) and 944–954 (QDETSQQTRKG). The span at 975–991 (ADERLAHEKSRSADSGK) shows a compositional bias: basic and acidic residues. The span at 1048 to 1067 (AATSPNPSSLGGSSTCSPAA) shows a compositional bias: polar residues. Over residues 1087-1099 (PPGPGPWASPGPS) the composition is skewed to pro residues. The segment covering 1173 to 1184 (RRAKKLASKRRK) has biased composition (basic residues). Positions 1185–1202 (SDQMSEKHTEAWEGKSFT) are enriched in basic and acidic residues. Positions 1353–1366 (RQGSSHRPQSSQGA) are enriched in polar residues. The span at 1411-1422 (DDLEDFATEGVS) shows a compositional bias: acidic residues.

As to quaternary structure, interacts with FHL2.

It localises to the cytoplasm. The protein localises to the myofibril. Its subcellular location is the sarcomere. It is found in the z line. In terms of biological role, plays an important role in cardiomyocyte hypertrophy via activation of the calcineurin/NFAT signaling pathway. The protein is Cardiac-enriched FHL2-interacting protein of Rattus norvegicus (Rat).